A 263-amino-acid polypeptide reads, in one-letter code: Thymidylate synthase (263 aa).

DUMP-binding positions include arginine 25 and 123–124 (RR). Residue cysteine 143 is the Nucleophile of the active site. DUMP contacts are provided by residues 163–166 (RSGD), asparagine 174, and 204–206 (HIY). Position 166 (aspartate 166) interacts with (6R)-5,10-methylene-5,6,7,8-tetrahydrofolate. Serine 262 provides a ligand contact to (6R)-5,10-methylene-5,6,7,8-tetrahydrofolate.

It belongs to the thymidylate synthase family. Bacterial-type ThyA subfamily. Homodimer.

Its subcellular location is the cytoplasm. The catalysed reaction is dUMP + (6R)-5,10-methylene-5,6,7,8-tetrahydrofolate = 7,8-dihydrofolate + dTMP. Its pathway is pyrimidine metabolism; dTTP biosynthesis. In terms of biological role, catalyzes the reductive methylation of 2'-deoxyuridine-5'-monophosphate (dUMP) to 2'-deoxythymidine-5'-monophosphate (dTMP) while utilizing 5,10-methylenetetrahydrofolate (mTHF) as the methyl donor and reductant in the reaction, yielding dihydrofolate (DHF) as a by-product. This enzymatic reaction provides an intracellular de novo source of dTMP, an essential precursor for DNA biosynthesis. This is Thymidylate synthase from Clostridium beijerinckii (strain ATCC 51743 / NCIMB 8052) (Clostridium acetobutylicum).